Here is a 445-residue protein sequence, read N- to C-terminus: C4-dicarboxylate transport protein (445 aa).

Helical transmembrane passes span 24–44 (VLYV…WVSP), 62–82 (LIKM…IAHI), 105–125 (FALI…GLAA), 163–183 (GDIL…MALG), 201–221 (FGVI…AMAF), 237–257 (LVAL…GLIA), 322–342 (IYMT…LTFT), and 370–390 (AGTL…VFSI).

The protein belongs to the dicarboxylate/amino acid:cation symporter (DAACS) (TC 2.A.23) family.

It is found in the cell inner membrane. Functionally, responsible for the transport of dicarboxylates such as succinate, fumarate, and malate from the periplasm across the membrane. This Rhodopseudomonas palustris (strain BisB5) protein is C4-dicarboxylate transport protein.